The following is a 128-amino-acid chain: Large ribosomal subunit protein bL17 (128 aa).

It belongs to the bacterial ribosomal protein bL17 family. In terms of assembly, part of the 50S ribosomal subunit. Contacts protein L32.

The sequence is that of Large ribosomal subunit protein bL17 from Streptococcus gordonii (strain Challis / ATCC 35105 / BCRC 15272 / CH1 / DL1 / V288).